A 1396-amino-acid chain; its full sequence is Probable ATP-dependent RNA helicase spindle-E (1396 aa).

The segment at 1-34 (MDEAAGPSTSRTSNLEDVDDEGASLAEEDEEHTK) is disordered. Residues 16–30 (EDVDDEGASLAEEDE) show a composition bias toward acidic residues. A Helicase ATP-binding domain is found at 68–234 (LDKIRSNAVV…FKIPKKSGYL (167 aa)). An ATP-binding site is contributed by 81–88 (GATGCGKT). Positions 180 to 183 (DEVH) match the DEAH box motif. The Helicase C-terminal domain occupies 292–468 (KGQEFGDSLE…TVVLKAKLLE (177 aa)). Residues 885–950 (NFAMGQMVAA…RQLDDSLGQL (66 aa)) form the Tudor domain.

The protein belongs to the DEAD box helicase family. DEAH subfamily.

Its subcellular location is the cytoplasm. The catalysed reaction is ATP + H2O = ADP + phosphate + H(+). Functionally, probable ATP-binding RNA helicase which plays a central role during gametogenesis by repressing transposable elements and preventing their mobilization, which is essential for the germline integrity. Acts via the piRNA metabolic process, which mediates the repression of transposable elements during meiosis by forming complexes composed of piRNAs and Piwi proteins and govern the methylation and subsequent repression of transposons. This Culex quinquefasciatus (Southern house mosquito) protein is Probable ATP-dependent RNA helicase spindle-E (spn-E).